The primary structure comprises 451 residues: BAHD acyltransferase At3g29680 (451 aa).

Residues His161 and Asp393 each act as proton acceptor in the active site.

It belongs to the plant acyltransferase family.

This chain is BAHD acyltransferase At3g29680, found in Arabidopsis thaliana (Mouse-ear cress).